The following is a 574-amino-acid chain: Proline--tRNA ligase (574 aa).

Belongs to the class-II aminoacyl-tRNA synthetase family. ProS type 1 subfamily. Homodimer.

Its subcellular location is the cytoplasm. It carries out the reaction tRNA(Pro) + L-proline + ATP = L-prolyl-tRNA(Pro) + AMP + diphosphate. Functionally, catalyzes the attachment of proline to tRNA(Pro) in a two-step reaction: proline is first activated by ATP to form Pro-AMP and then transferred to the acceptor end of tRNA(Pro). As ProRS can inadvertently accommodate and process non-cognate amino acids such as alanine and cysteine, to avoid such errors it has two additional distinct editing activities against alanine. One activity is designated as 'pretransfer' editing and involves the tRNA(Pro)-independent hydrolysis of activated Ala-AMP. The other activity is designated 'posttransfer' editing and involves deacylation of mischarged Ala-tRNA(Pro). The misacylated Cys-tRNA(Pro) is not edited by ProRS. The protein is Proline--tRNA ligase of Nautilia profundicola (strain ATCC BAA-1463 / DSM 18972 / AmH).